A 555-amino-acid chain; its full sequence is CCR4-NOT transcription complex subunit 6-like (555 aa).

Residues 1–152 (MRLIGMPKEK…SLYQDPDGTR (152 aa)) are required for interaction with CNOT1, CNOT3 and CNOT7. LRR repeat units follow at residues 57-78 (HLTA…IAKL), 80-101 (NLVY…LGNM), 103-125 (SLRE…GRLF), and 126-148 (QLQT…YQDP). A nuclease domain region spans residues 158–555 (MLDNLAVHPE…VNGVHLPNRR (398 aa)). Mg(2+) is bound at residue glutamate 240. Substrate is bound by residues glutamate 240, glutamate 276, histidine 360, and proline 365. A Mg(2+)-binding site is contributed by aspartate 410. Aspartate 410 serves as the catalytic Proton donor/acceptor. Positions 412, 479, and 484 each coordinate substrate.

Belongs to the CCR4/nocturin family. Component of the CCR4-NOT complex; distinct complexes seem to exist that differ in the participation of probably mutually exclusive catalytic subunits; the complex contains two deadenylase subunits, CNOT6 or CNOT6L, and CNOT7 or CNOT8. Interacts with CNOT1, CNOT3, CNOT7, CNOT8 and CNOT9. Interacts with TOB1. Interacts with NANOS2. Interacts with ZFP36. Interacts with ZFP36L2. Interacts with RBM46. The cofactor is Mg(2+).

The protein localises to the cytoplasm. It localises to the nucleus. It carries out the reaction Exonucleolytic cleavage of poly(A) to 5'-AMP.. Functionally, poly(A) nuclease with 3'-5' RNase activity. Catalytic component of the CCR4-NOT complex which is one of the major cellular mRNA deadenylases and is linked to various cellular processes including bulk mRNA degradation, miRNA-mediated repression, translational repression during translational initiation and general transcription regulation. Additional complex functions may be a consequence of its influence on mRNA expression. Involved in mRNA decay mediated by the major-protein-coding determinant of instability (mCRD) of the FOS gene in the cytoplasm. Involved in deadenylation-dependent degradation of CDKN1B mRNA. Its mRNA deadenylase activity can be inhibited by TOB1. Mediates cell proliferation and cell survival and prevents cellular senescence. In Mus musculus (Mouse), this protein is CCR4-NOT transcription complex subunit 6-like (Cnot6l).